Here is a 208-residue protein sequence, read N- to C-terminus: Octanoyltransferase (208 aa).

In terms of domain architecture, BPL/LPL catalytic spans 30–208 (GTASEAVFIL…ILKQEFYKIF (179 aa)). Substrate contacts are provided by residues 69-76 (RGGKFTYH), 142-144 (SIG), and 155-157 (GVA). Cysteine 173 functions as the Acyl-thioester intermediate in the catalytic mechanism.

The protein belongs to the LipB family.

The protein resides in the cytoplasm. The enzyme catalyses octanoyl-[ACP] + L-lysyl-[protein] = N(6)-octanoyl-L-lysyl-[protein] + holo-[ACP] + H(+). It participates in protein modification; protein lipoylation via endogenous pathway; protein N(6)-(lipoyl)lysine from octanoyl-[acyl-carrier-protein]: step 1/2. Its function is as follows. Catalyzes the transfer of endogenously produced octanoic acid from octanoyl-acyl-carrier-protein onto the lipoyl domains of lipoate-dependent enzymes. Lipoyl-ACP can also act as a substrate although octanoyl-ACP is likely to be the physiological substrate. In Orientia tsutsugamushi (strain Boryong) (Rickettsia tsutsugamushi), this protein is Octanoyltransferase.